A 297-amino-acid polypeptide reads, in one-letter code: Phosphoribosylaminoimidazole-succinocarboxamide synthase (297 aa).

This sequence belongs to the SAICAR synthetase family.

It catalyses the reaction 5-amino-1-(5-phospho-D-ribosyl)imidazole-4-carboxylate + L-aspartate + ATP = (2S)-2-[5-amino-1-(5-phospho-beta-D-ribosyl)imidazole-4-carboxamido]succinate + ADP + phosphate + 2 H(+). Its pathway is purine metabolism; IMP biosynthesis via de novo pathway; 5-amino-1-(5-phospho-D-ribosyl)imidazole-4-carboxamide from 5-amino-1-(5-phospho-D-ribosyl)imidazole-4-carboxylate: step 1/2. The chain is Phosphoribosylaminoimidazole-succinocarboxamide synthase from Mycobacterium tuberculosis (strain ATCC 25177 / H37Ra).